Here is a 130-residue protein sequence, read N- to C-terminus: Tripartite terminase subunit 2 (130 aa).

The protein belongs to the herpesviridae TRM2 protein family. In terms of assembly, associates with TRM1 and TRM3 to form the tripartite terminase complex.

The protein localises to the host nucleus. In terms of biological role, component of the molecular motor that translocates viral genomic DNA in empty capsid during DNA packaging. Forms a tripartite terminase complex together with TRM1 and TRM3 in the host cytoplasm. Once the complex reaches the host nucleus, it interacts with the capsid portal vertex. This portal forms a ring in which genomic DNA is translocated into the capsid. This Homo sapiens (Human) protein is Tripartite terminase subunit 2.